The sequence spans 1020 residues: Probable leucine-rich repeat receptor-like serine/threonine-protein kinase At3g14840 (1020 aa).

The signal sequence occupies residues 1-26; sequence MSLNRQLLFTYYFIVSLILFSDFVSS. Topologically, residues 27–614 are extracellular; the sequence is ATLPKEEVDA…GTGGGSSVGT (588 aa). N-linked (GlcNAc...) asparagine glycosylation is found at Asn50 and Asn81. LRR repeat units follow at residues 86–110, 111–134, 136–157, 158–181, 182–204, 206–231, 253–276, 277–301, 302–324, and 326–349; these read ICHV…LSGL, PFLQ…WGAS, LLNI…LGNL, TTLS…LGNL, PNLK…TFAK, TTLT…NWKG, LGTL…PLRN, MTSM…LGQN, RKLK…TYSG, and SDVD…MVDQ. Residues Asn124, Asn138, and Asn156 are each glycosylated (N-linked (GlcNAc...) asparagine). Residue Asn193 is glycosylated (N-linked (GlcNAc...) asparagine). 2 N-linked (GlcNAc...) asparagine glycosylation sites follow: Asn276 and Asn289. N-linked (GlcNAc...) asparagine glycosylation is found at Asn359, Asn386, Asn389, Asn417, Asn461, Asn469, and Asn498. Residues 479–501 form an LRR 11 repeat; that stretch reads QARLSAISLTYQALCLGKGNYTV. A helical membrane pass occupies residues 615-635; that stretch reads VVGSVIASTVFLVLLIGGILW. Over 636 to 1020 the chain is Cytoplasmic; sequence WRGCLRPKSQ…LDSAYWNTRT (385 aa). The region spanning 672–949 is the Protein kinase domain; sequence FDPANKIGEG…VSMLEGHSTV (278 aa). Residues 678-686 and Lys700 each bind ATP; that span reads IGEGGFGPV. Tyr745 carries the post-translational modification Phosphotyrosine. Asp798 serves as the catalytic Proton acceptor. Phosphoserine is present on Ser831. Thr832 and Thr837 each carry phosphothreonine. Position 845 is a phosphotyrosine (Tyr845).

It belongs to the protein kinase superfamily. Ser/Thr protein kinase family.

The protein resides in the cell membrane. The enzyme catalyses L-seryl-[protein] + ATP = O-phospho-L-seryl-[protein] + ADP + H(+). The catalysed reaction is L-threonyl-[protein] + ATP = O-phospho-L-threonyl-[protein] + ADP + H(+). The sequence is that of Probable leucine-rich repeat receptor-like serine/threonine-protein kinase At3g14840 (LRR-RLK) from Arabidopsis thaliana (Mouse-ear cress).